Consider the following 97-residue polypeptide: Co-chaperonin GroES (97 aa).

The protein belongs to the GroES chaperonin family. In terms of assembly, heptamer of 7 subunits arranged in a ring. Interacts with the chaperonin GroEL.

Its subcellular location is the cytoplasm. Its function is as follows. Together with the chaperonin GroEL, plays an essential role in assisting protein folding. The GroEL-GroES system forms a nano-cage that allows encapsulation of the non-native substrate proteins and provides a physical environment optimized to promote and accelerate protein folding. GroES binds to the apical surface of the GroEL ring, thereby capping the opening of the GroEL channel. This is Co-chaperonin GroES from Pseudomonas putida (strain GB-1).